The primary structure comprises 440 residues: Streptokinase (440 aa).

Positions 1–26 (MKNYLSFGMFALLFALTFGTVKPVQA) are cleaved as a signal peptide. A disordered region spans residues 72-94 (PAQGGKTEQGLRPKSKPLATDKG).

This protein is not a protease, but it activates plasminogen by complexing with it. As a potential virulence factor, it is thought to prevent the formation of effective fibrin barriers around the site of infection, thereby contributing to the invasiveness of the cells. The protein is Streptokinase (ska) of Streptococcus pyogenes.